A 186-amino-acid chain; its full sequence is Ribosome-recycling factor (186 aa).

It belongs to the RRF family.

Its subcellular location is the cytoplasm. Functionally, responsible for the release of ribosomes from messenger RNA at the termination of protein biosynthesis. May increase the efficiency of translation by recycling ribosomes from one round of translation to another. This is Ribosome-recycling factor from Paraburkholderia phymatum (strain DSM 17167 / CIP 108236 / LMG 21445 / STM815) (Burkholderia phymatum).